The primary structure comprises 138 residues: Putative pre-16S rRNA nuclease (138 aa).

This sequence belongs to the YqgF nuclease family.

The protein localises to the cytoplasm. Could be a nuclease involved in processing of the 5'-end of pre-16S rRNA. In Bacteroides fragilis (strain ATCC 25285 / DSM 2151 / CCUG 4856 / JCM 11019 / LMG 10263 / NCTC 9343 / Onslow / VPI 2553 / EN-2), this protein is Putative pre-16S rRNA nuclease.